The primary structure comprises 223 residues: Pyridoxine/pyridoxamine 5'-phosphate oxidase (223 aa).

Residues 13–16 (RKNY) and Lys-73 contribute to the substrate site. Residues 68–73 (RIVLLK), 83–84 (YT), Lys-90, and Gln-112 each bind FMN. Tyr-130, Arg-134, and Ser-138 together coordinate substrate. FMN contacts are provided by residues 147–148 (QS) and Trp-193. 199–201 (RLH) lines the substrate pocket. Arg-203 is a binding site for FMN.

The protein belongs to the pyridoxamine 5'-phosphate oxidase family. Homodimer. Requires FMN as cofactor.

The enzyme catalyses pyridoxamine 5'-phosphate + O2 + H2O = pyridoxal 5'-phosphate + H2O2 + NH4(+). The catalysed reaction is pyridoxine 5'-phosphate + O2 = pyridoxal 5'-phosphate + H2O2. Its pathway is cofactor metabolism; pyridoxal 5'-phosphate salvage; pyridoxal 5'-phosphate from pyridoxamine 5'-phosphate: step 1/1. The protein operates within cofactor metabolism; pyridoxal 5'-phosphate salvage; pyridoxal 5'-phosphate from pyridoxine 5'-phosphate: step 1/1. Its function is as follows. Catalyzes the oxidation of either pyridoxine 5'-phosphate (PNP) or pyridoxamine 5'-phosphate (PMP) into pyridoxal 5'-phosphate (PLP). The protein is Pyridoxine/pyridoxamine 5'-phosphate oxidase of Rhodopirellula baltica (strain DSM 10527 / NCIMB 13988 / SH1).